We begin with the raw amino-acid sequence, 406 residues long: Proteasome-activating nucleotidase 1 (406 aa).

The segment covering 1–12 (MTDTVEDVELPY) has biased composition (acidic residues). The disordered stretch occupies residues 1–20 (MTDTVEDVELPYDDSASQQD). Residues 12–70 (YDDSASQQDKLEALEEQLSTLEEENEEMRDRLLDANAENNKYQQKLERLSHENKKLKQS) adopt a coiled-coil conformation. ATP-binding positions include 192-197 (GTGKTL) and H331. A disordered region spans residues 385 to 406 (AREKLDQDSEPAAATDVSRTFA). Residues 404 to 406 (TFA) are docks into pockets in the proteasome alpha-ring to cause gate opening.

The protein belongs to the AAA ATPase family. As to quaternary structure, homohexamer. The hexameric complex has a two-ring architecture resembling a top hat that caps the 20S proteasome core at one or both ends. Upon ATP-binding, the C-terminus of PAN interacts with the alpha-rings of the proteasome core by binding to the intersubunit pockets.

Its subcellular location is the cytoplasm. ATPase which is responsible for recognizing, binding, unfolding and translocation of substrate proteins into the archaeal 20S proteasome core particle. Is essential for opening the gate of the 20S proteasome via an interaction with its C-terminus, thereby allowing substrate entry and access to the site of proteolysis. Thus, the C-termini of the proteasomal ATPase function like a 'key in a lock' to induce gate opening and therefore regulate proteolysis. Unfolding activity requires energy from ATP hydrolysis, whereas ATP binding alone promotes ATPase-20S proteasome association which triggers gate opening, and supports translocation of unfolded substrates. This Halobacterium salinarum (strain ATCC 700922 / JCM 11081 / NRC-1) (Halobacterium halobium) protein is Proteasome-activating nucleotidase 1.